A 332-amino-acid polypeptide reads, in one-letter code: Probable allantoicase (332 aa).

It belongs to the allantoicase family.

It carries out the reaction allantoate + H2O = (S)-ureidoglycolate + urea. It participates in nitrogen metabolism; (S)-allantoin degradation; (S)-ureidoglycolate from allantoate (aminidohydrolase route): step 1/1. This is Probable allantoicase from Pseudomonas aeruginosa (strain LESB58).